Reading from the N-terminus, the 371-residue chain is MEKLEQKTIVELRNVTKSYGDKTILKDLNLTINDGEFLTILGPSGCGKTTALRLIAGFEDLTEGSIILDGQDVSNVSAEKRPVNTVFQSYALFPHMTIFENVAFGLRMQKVPNEQITPRVMEALRMVRLEDRAEQKPAQLSGGQQQRIAIARAVVNKPKVLLLDESLSALDYKLRKEMQNELKALQRQLGITFIFVTHDQEEALTMSDRIIVMNAGKVAQDGTPREIYEEPKNLFVARFIGEINVFDATVIERIDARNVKANVEGRICHIKVEDMQVVPNQKLKVLLRPEDIVIEELDEDQSSKAIIGHIIDRNYKGMTLESSVKLDHNGMNVLVSEFFNEDDPHIDHSVGQKVALTWHEGWEVVLNDEDC.

Residues 10 to 240 (VELRNVTKSY…PKNLFVARFI (231 aa)) enclose the ABC transporter domain. Residue 42–49 (GPSGCGKT) coordinates ATP.

It belongs to the ABC transporter superfamily. Spermidine/putrescine importer (TC 3.A.1.11.1) family. As to quaternary structure, the complex is composed of two ATP-binding proteins (PotA), two transmembrane proteins (PotB and PotC) and a solute-binding protein (PotD).

The protein localises to the cell inner membrane. The enzyme catalyses ATP + H2O + polyamine-[polyamine-binding protein]Side 1 = ADP + phosphate + polyamineSide 2 + [polyamine-binding protein]Side 1.. Functionally, part of the ABC transporter complex PotABCD involved in spermidine/putrescine import. Responsible for energy coupling to the transport system. This Haemophilus ducreyi (strain 35000HP / ATCC 700724) protein is Spermidine/putrescine import ATP-binding protein PotA.